The primary structure comprises 536 residues: Glucose-6-phosphate isomerase (536 aa).

Catalysis depends on Glu345, which acts as the Proton donor. Residues His376 and Lys505 contribute to the active site.

It belongs to the GPI family.

The protein localises to the cytoplasm. It catalyses the reaction alpha-D-glucose 6-phosphate = beta-D-fructose 6-phosphate. It participates in carbohydrate biosynthesis; gluconeogenesis. It functions in the pathway carbohydrate degradation; glycolysis; D-glyceraldehyde 3-phosphate and glycerone phosphate from D-glucose: step 2/4. Functionally, catalyzes the reversible isomerization of glucose-6-phosphate to fructose-6-phosphate. The chain is Glucose-6-phosphate isomerase from Ruegeria sp. (strain TM1040) (Silicibacter sp.).